Here is a 496-residue protein sequence, read N- to C-terminus: MDQDYERRLLRQIVIQNENTMPRVTEMRRTLTPASSPVSSPSKHGDRFIPSRAGANWSVNFHRINENEKSPSQNRKAKDATSDNGKDGLAYSALLKNELLGAGIEKVQDPQTEDRRLQPSTPEKKGLFTYSLSTKRSSPDDGNDVSPYSLSPVSNKSQKLLRSPRKPTRKISKIPFKVLDAPELQDDFYLNLVDWSSLNVLSVGLGTCVYLWSACTSQVTRLCDLSVEGDSVTSVGWSERGNLVAVGTHKGFVQIWDAAAGKKLSMLEGHTARVGALAWNAEQLSSGSRDRMILQRDIRTPPLQSERRLQGHRQEVCGLKWSTDHQLLASGGNDNKLLVWNHSSLSPVQQYTEHLAAVKAIAWSPHQHGLLASGGGTADRCIRFWNTLTGQPLQCIDTGSQVCNLAWSKHANELVSTHGYSQNQILVWKYPSLTQVAKLTGHSYRVLYLAMSPDGEAIVTGAGDETLRFWNVFSKTRSTKVKWESVSVLNLFTRIR.

3 disordered regions span residues 28-51, 64-88, and 105-166; these read RRTLTPASSPVSSPSKHGDRFIPS, INENEKSPSQNRKAKDATSDNGKDG, and EKVQ…SPRK. Threonine 32 is modified (phosphothreonine). Polar residues predominate over residues 32–42; that stretch reads TPASSPVSSPS. Phosphoserine is present on serine 36. Residues 47–52 are involved in APC/FZR1 E3 ubiquitin-protein ligase complex activity; that stretch reads RFIPSR. At lysine 69 the chain carries N6-acetyllysine. Composition is skewed to basic and acidic residues over residues 76 to 86 and 106 to 126; these read KAKDATSDNGK and KVQDPQTEDRRLQPSTPEKKG. Phosphoserine occurs at positions 133, 138, 146, and 151. Over residues 146-160 the composition is skewed to polar residues; sequence SPYSLSPVSNKSQKL. N6-acetyllysine is present on lysine 159. WD repeat units follow at residues 182–222, 227–266, 269–306, 311–350, 353–395, 397–438, and 441–480; these read PELQ…VTRL, VEGDSVTSVGWSERGNLVAVGTHKGFVQIWDAAAGKKLSM, GHTARVGALAWNAEQLSSGSRDRMILQRDIRTPPLQSE, GHRQEVCGLKWSTDHQLLASGGNDNKLLVWNHSSLSPVQQ, EHLA…PLQC, DTGS…QVAK, and GHSYRVLYLAMSPDGEAIVTGAGDETLRFWNVFSKTRSTK.

It belongs to the WD repeat CDC20/Fizzy family. As to quaternary structure, the unphosphorylated form interacts with APC/C during mitosis. Interacts with NINL. Interacts (in complex with the anaphase promoting complex APC) with MAD2L2; inhibits FZR1-mediated APC/C activation. Interacts with SIRT2 and USP37. Interacts (via WD repeats) with MAK. Interacts with RBBP8/CtIP; this interaction leads to RBBP8 proteasomal degradation. Interacts with HECW2. Interacts with SASS6; the interaction is regulated by CENATAC and leads to SASS6 proteasomal degradation. Interacts (via N-terminus) with CCNF. Interacts with CDC6. Interacts with TK1 (via the KEN box). Post-translationally, acetylated. Deacetylated by SIRT2 at Lys-69 and Lys-159; deacetylation enhances the interaction of FZR1 with CDC27, leading to activation of anaphase promoting complex/cyclosome (APC/C). In terms of processing, following DNA damage, it is dephosphorylated by CDC14B in G2 phase, leading to its reassociation with the APC/C, and allowing an efficient G2 DNA damage checkpoint. Phosphorylated by MAK. Ubiquitinated by the SCF(CCNF) E3 ubiquitin-protein ligase complex; leading to its degradation by the proteasome. Isoform 2 is expressed at high levels in heart, liver, spleen and some cancer cell lines whereas isoform 3 is expressed only at low levels in these tissues.

Its subcellular location is the nucleus. It is found in the cytoplasm. It participates in protein modification; protein ubiquitination. Its function is as follows. Substrate-specific adapter for the anaphase promoting complex/cyclosome (APC/C) E3 ubiquitin-protein ligase complex. Associates with the APC/C in late mitosis, in replacement of CDC20, and activates the APC/C during anaphase and telophase. The APC/C remains active in degrading substrates to ensure that positive regulators of the cell cycle do not accumulate prematurely. At the G1/S transition FZR1 is phosphorylated, leading to its dissociation from the APC/C. Following DNA damage, it is required for the G2 DNA damage checkpoint: its dephosphorylation and reassociation with the APC/C leads to the ubiquitination of PLK1, preventing entry into mitosis. Acts as an adapter for APC/C to target the DNA-end resection factor RBBP8/CtIP for ubiquitination and subsequent proteasomal degradation. Through the regulation of RBBP8/CtIP protein turnover, may play a role in DNA damage response, favoring DNA double-strand repair through error-prone non-homologous end joining (NHEJ) over error-free, RBBP8-mediated homologous recombination (HR). In Homo sapiens (Human), this protein is Fizzy-related protein homolog.